A 347-amino-acid polypeptide reads, in one-letter code: Protein RecA (347 aa).

64 to 71 (GPESSGKT) is an ATP binding site. The tract at residues 328–347 (DKVDEDKTEEEASQESLDLK) is disordered.

The protein belongs to the RecA family.

It localises to the cytoplasm. Functionally, can catalyze the hydrolysis of ATP in the presence of single-stranded DNA, the ATP-dependent uptake of single-stranded DNA by duplex DNA, and the ATP-dependent hybridization of homologous single-stranded DNAs. It interacts with LexA causing its activation and leading to its autocatalytic cleavage. The polypeptide is Protein RecA (Oceanobacillus iheyensis (strain DSM 14371 / CIP 107618 / JCM 11309 / KCTC 3954 / HTE831)).